Here is a 215-residue protein sequence, read N- to C-terminus: Orotate phosphoribosyltransferase (215 aa).

5-phospho-alpha-D-ribose 1-diphosphate is bound at residue K26. Residue 34–35 (FF) coordinates orotate. Residues 72–73 (YK), R99, K100, K103, H105, and 124–132 (DDVITAGTA) each bind 5-phospho-alpha-D-ribose 1-diphosphate. Orotate is bound by residues T128 and R156.

It belongs to the purine/pyrimidine phosphoribosyltransferase family. PyrE subfamily. As to quaternary structure, homodimer. Mg(2+) is required as a cofactor.

The catalysed reaction is orotidine 5'-phosphate + diphosphate = orotate + 5-phospho-alpha-D-ribose 1-diphosphate. The protein operates within pyrimidine metabolism; UMP biosynthesis via de novo pathway; UMP from orotate: step 1/2. Functionally, catalyzes the transfer of a ribosyl phosphate group from 5-phosphoribose 1-diphosphate to orotate, leading to the formation of orotidine monophosphate (OMP). The polypeptide is Orotate phosphoribosyltransferase (Shewanella oneidensis (strain ATCC 700550 / JCM 31522 / CIP 106686 / LMG 19005 / NCIMB 14063 / MR-1)).